A 202-amino-acid polypeptide reads, in one-letter code: D-alanyl-D-alanine dipeptidase (202 aa).

The Zn(2+) site is built by His-116 and Asp-123. The active-site Proton donor/acceptor is the Glu-181. A Zn(2+)-binding site is contributed by His-184.

It belongs to the peptidase M15D family. Zn(2+) serves as cofactor.

It catalyses the reaction D-alanyl-D-alanine + H2O = 2 D-alanine. Functionally, catalyzes hydrolysis of the D-alanyl-D-alanine dipeptide. This is D-alanyl-D-alanine dipeptidase (vanXB) from Enterococcus faecalis (strain ATCC 700802 / V583).